Reading from the N-terminus, the 297-residue chain is Bifunctional protein FolD 1 (297 aa).

NADP(+) is bound by residues 164–166 (GRS), Ser193, and Ile234.

The protein belongs to the tetrahydrofolate dehydrogenase/cyclohydrolase family. Homodimer.

It carries out the reaction (6R)-5,10-methylene-5,6,7,8-tetrahydrofolate + NADP(+) = (6R)-5,10-methenyltetrahydrofolate + NADPH. The enzyme catalyses (6R)-5,10-methenyltetrahydrofolate + H2O = (6R)-10-formyltetrahydrofolate + H(+). The protein operates within one-carbon metabolism; tetrahydrofolate interconversion. In terms of biological role, catalyzes the oxidation of 5,10-methylenetetrahydrofolate to 5,10-methenyltetrahydrofolate and then the hydrolysis of 5,10-methenyltetrahydrofolate to 10-formyltetrahydrofolate. The protein is Bifunctional protein FolD 1 of Haloarcula marismortui (strain ATCC 43049 / DSM 3752 / JCM 8966 / VKM B-1809) (Halobacterium marismortui).